Reading from the N-terminus, the 673-residue chain is UvrABC system protein B (673 aa).

Positions 24-182 constitute a Helicase ATP-binding domain; it reads EGVERNDPAQ…YSFVEILYNR (159 aa). Residue 37-44 participates in ATP binding; the sequence is GVTGSGKT. Positions 90 to 113 match the Beta-hairpin motif; the sequence is YYDYYQPEAFMPTSGLYIEKDLAI. Positions 429–591 constitute a Helicase C-terminal domain; that stretch reads QIDDLLDEIQ…ITPITVNKSK (163 aa). A UVR domain is found at 634–669; that stretch reads TKMIDRAKKDMDKAAKDLDFVEAARYRDEMFALQKI.

This sequence belongs to the UvrB family. In terms of assembly, forms a heterotetramer with UvrA during the search for lesions. Interacts with UvrC in an incision complex.

It is found in the cytoplasm. The UvrABC repair system catalyzes the recognition and processing of DNA lesions. A damage recognition complex composed of 2 UvrA and 2 UvrB subunits scans DNA for abnormalities. Upon binding of the UvrA(2)B(2) complex to a putative damaged site, the DNA wraps around one UvrB monomer. DNA wrap is dependent on ATP binding by UvrB and probably causes local melting of the DNA helix, facilitating insertion of UvrB beta-hairpin between the DNA strands. Then UvrB probes one DNA strand for the presence of a lesion. If a lesion is found the UvrA subunits dissociate and the UvrB-DNA preincision complex is formed. This complex is subsequently bound by UvrC and the second UvrB is released. If no lesion is found, the DNA wraps around the other UvrB subunit that will check the other stand for damage. The sequence is that of UvrABC system protein B from Cytophaga hutchinsonii (strain ATCC 33406 / DSM 1761 / CIP 103989 / NBRC 15051 / NCIMB 9469 / D465).